The sequence spans 760 residues: Ferric/cupric reductase transmembrane component 1 (760 aa).

The N-terminal stretch at 1–18 is a signal peptide; sequence MKIQQLIVFLFAVVLIDA. Over 19–212 the chain is Extracellular; sequence RTPKRYSELD…NNNFNLSINY (194 aa). N-linked (GlcNAc...) asparagine glycans are attached at residues N78, N91, N111, N143, N155, and N207. A disordered region spans residues 119–177; sequence TTKSSSGSKTSASASKSSKSTGSSNASKSSTNAHGSNSSTSSTSSSSSKSGKGNSGTST. A helical transmembrane segment spans residues 213–233; it reads GSGLLGYWAGILAIAIFANMI. The Cytoplasmic segment spans residues 234–288; that stretch reads KKMFPSLTNYLSGSISNLFRKHLFLPATFRKKKAQEFSIGVYGFFDGLIPTRLET. The helical transmembrane segment at 289–309 threads the bilayer; the sequence is IIVVIFVVLTGLFSALHIHHV. Residues 310-324 lie on the Extracellular side of the membrane; the sequence is KDNPQYATKNAELGH. A helical transmembrane segment spans residues 325–345; sequence LIADRTGILGTFLIPLLILFG. The Ferric oxidoreductase domain occupies 330-445; sequence TGILGTFLIP…HIVLVVFFVV (116 aa). At 346–371 the chain is on the cytoplasmic side; that stretch reads GRNNFLQWLTGWDFATFIMYHRWISR. 2 residues coordinate heme: H366 and H380. The helical transmembrane segment at 372–392 threads the bilayer; it reads VDVLLIIVHAITFSVSDKATG. Over 393-403 the chain is Extracellular; it reads KYNTRMKRDFM. Residues 404-424 traverse the membrane as a helical segment; sequence IWGTVSTICGGFILFQAMLFF. At 425-430 the chain is on the cytoplasmic side; the sequence is RRKCYE. Residues 431-451 form a helical membrane-spanning segment; sequence VFFLIHIVLVVFFVVGGYYHL. The heme site is built by H436 and H450. The Extracellular segment spans residues 452-760; the sequence is ESQGYGDFMW…EYHEQLQTWA (309 aa). An FAD-binding FR-type domain is found at 465 to 583; sequence AVWAFDRVVR…EGPYGEPSSA (119 aa). 575–578 contributes to the NADP(+) binding site; that stretch reads GPYG. N-linked (GlcNAc...) asparagine glycosylation is present at N615. Residue 726–727 coordinates NADP(+); the sequence is CG. N744 carries an N-linked (GlcNAc...) asparagine glycan.

Belongs to the ferric reductase (FRE) family. FAD is required as a cofactor. It depends on heme as a cofactor.

Its subcellular location is the cell membrane. It carries out the reaction 2 a Fe(II)-siderophore + NADP(+) + H(+) = 2 a Fe(III)-siderophore + NADPH. Ferric reductase responsible for reducing extracellular iron and copper prior to import. Catalyzes the reductive uptake of Fe(3+)-salts and Fe(3+) bound to catecholate or hydroxamate siderophores. Fe(3+) is reduced to Fe(2+), which then dissociates from the siderophore and can be imported by the high-affinity Fe(2+) transport complex in the plasma membrane. Also participates in Cu(2+) reduction and Cu(+) uptake. Involved in maintenance of cell wall integrity (CWI), mitochondrial function, and interaction between the pathogen and the host. The sequence is that of Ferric/cupric reductase transmembrane component 1 from Candida albicans (strain SC5314 / ATCC MYA-2876) (Yeast).